A 59-amino-acid polypeptide reads, in one-letter code: Large ribosomal subunit protein uL30 (59 aa).

It belongs to the universal ribosomal protein uL30 family. Part of the 50S ribosomal subunit.

This chain is Large ribosomal subunit protein uL30, found in Desulforamulus reducens (strain ATCC BAA-1160 / DSM 100696 / MI-1) (Desulfotomaculum reducens).